Reading from the N-terminus, the 431-residue chain is Enolase (431 aa).

Substrate-binding residues include His157 and Glu166. The active-site Proton donor is Glu209. Mg(2+)-binding residues include Asp244, Glu293, and Asp318. Residues Glu293 and Asp318 each coordinate substrate. Residue Lys343 is the Proton acceptor of the active site. Substrate contacts are provided by residues 370–373 (SHRS) and Lys394.

It belongs to the enolase family. In terms of assembly, homodimer. Requires Mg(2+) as cofactor.

It is found in the cytoplasm. The catalysed reaction is (2R)-2-phosphoglycerate = phosphoenolpyruvate + H2O. The protein operates within carbohydrate degradation; glycolysis; pyruvate from D-glyceraldehyde 3-phosphate: step 4/5. The protein is Enolase (ENO) of Fasciola hepatica (Liver fluke).